The following is a 379-amino-acid chain: Histidinol-phosphate aminotransferase (379 aa).

Position 236 is an N6-(pyridoxal phosphate)lysine (K236).

The protein belongs to the class-II pyridoxal-phosphate-dependent aminotransferase family. Histidinol-phosphate aminotransferase subfamily. As to quaternary structure, homodimer. Pyridoxal 5'-phosphate serves as cofactor.

The catalysed reaction is L-histidinol phosphate + 2-oxoglutarate = 3-(imidazol-4-yl)-2-oxopropyl phosphate + L-glutamate. The protein operates within amino-acid biosynthesis; L-histidine biosynthesis; L-histidine from 5-phospho-alpha-D-ribose 1-diphosphate: step 7/9. The chain is Histidinol-phosphate aminotransferase from Desulfotalea psychrophila (strain LSv54 / DSM 12343).